The primary structure comprises 241 residues: NAD(P)H-quinone oxidoreductase subunit K (241 aa).

Residues Cys-60, Cys-61, Cys-125, and Cys-156 each contribute to the [4Fe-4S] cluster site. Positions 220–241 (SSQKEKITELPEKTEITNTEKD) are disordered. Residues 222-241 (QKEKITELPEKTEITNTEKD) are compositionally biased toward basic and acidic residues.

Belongs to the complex I 20 kDa subunit family. As to quaternary structure, NDH-1 can be composed of about 15 different subunits; different subcomplexes with different compositions have been identified which probably have different functions. [4Fe-4S] cluster is required as a cofactor.

The protein localises to the cellular thylakoid membrane. The catalysed reaction is a plastoquinone + NADH + (n+1) H(+)(in) = a plastoquinol + NAD(+) + n H(+)(out). It catalyses the reaction a plastoquinone + NADPH + (n+1) H(+)(in) = a plastoquinol + NADP(+) + n H(+)(out). Functionally, NDH-1 shuttles electrons from an unknown electron donor, via FMN and iron-sulfur (Fe-S) centers, to quinones in the respiratory and/or the photosynthetic chain. The immediate electron acceptor for the enzyme in this species is believed to be plastoquinone. Couples the redox reaction to proton translocation, and thus conserves the redox energy in a proton gradient. Cyanobacterial NDH-1 also plays a role in inorganic carbon-concentration. This Prochlorococcus marinus (strain MIT 9215) protein is NAD(P)H-quinone oxidoreductase subunit K.